The primary structure comprises 120 residues: Nitrogenase-stabilizing/protective protein NifW (120 aa).

It belongs to the NifW family. In terms of assembly, homotrimer; associates with NifD.

Functionally, may protect the nitrogenase Fe-Mo protein from oxidative damage. The chain is Nitrogenase-stabilizing/protective protein NifW from Rhodospirillum rubrum (strain ATCC 11170 / ATH 1.1.1 / DSM 467 / LMG 4362 / NCIMB 8255 / S1).